The chain runs to 329 residues: Minor capsid protein A1 (329 aa).

Positions 143–162 are disordered; that stretch reads GPSPVPGPNPDPPLEPPPGT. Pro residues predominate over residues 145-161; the sequence is SPVPGPNPDPPLEPPPG.

It localises to the virion. Minor capsid protein. In Qbeta virus (strain MX1), this protein is Minor capsid protein A1.